We begin with the raw amino-acid sequence, 350 residues long: Putative ATP-binding protein BruAb2_0487 (350 aa).

Residues 4–234 enclose the ABC transporter domain; sequence VSLRGISKTF…PANKFVAGFI (231 aa). 36-43 is an ATP binding site; it reads GPSGCGKS.

It belongs to the ABC transporter superfamily. In terms of assembly, the complex is composed of two ATP-binding proteins (BruAb2_0487), two transmembrane proteins (BruAb2_0483) and a solute-binding protein (BruAb2_0484).

It is found in the cell inner membrane. Its function is as follows. Probably part of an ABC transporter complex. Probably responsible for energy coupling to the transport system. The sequence is that of Putative ATP-binding protein BruAb2_0487 from Brucella abortus biovar 1 (strain 9-941).